Reading from the N-terminus, the 384-residue chain is MPKTAKNKRNNAASGPYDKKSKGSGSTNIFKFDKDYGQHILKNPGISDAIVEKAFLKPTDVVVEVGPGTGNITVRALERAKKVIAIELDPRMGAEVTKRVQGTPLAKKLEVILGDVIKLPQIPPCDALISNTPYQISSPLIFKMLSMPQPPRVAVLMFQREFAKRLVAKPGDSLYSRLTVNVNFWATCTHIMKVGKANFKPPPKVESDVVRIEPYLGSARPNIAFEEFDGLLRIAFNRKNKTLRAAFSIKEVLALCEKNYKVYCTLHNIPLDESVLSDPSLTADMDVDMDANSDTDNDNDGDAMEEDDDDMPTFFKEVKEAEAAKEAAKTPSKNPKSKVALIVRAKINKVLTKTGLANKRARQCDQNDFLKLLLAFHEEGIHFS.

A disordered region spans residues 1-24; sequence MPKTAKNKRNNAASGPYDKKSKGS. S-adenosyl-L-methionine contacts are provided by His-39, Leu-41, Gly-66, Glu-87, Asp-115, and Asn-131. The segment at 289-309 is disordered; the sequence is MDANSDTDNDNDGDAMEEDDD.

It belongs to the class I-like SAM-binding methyltransferase superfamily. rRNA adenine N(6)-methyltransferase family.

The protein localises to the cytoplasm. It is found in the nucleus. Its subcellular location is the nucleolus. The catalysed reaction is adenosine(1779)/adenosine(1780) in 18S rRNA + 4 S-adenosyl-L-methionine = N(6)-dimethyladenosine(1779)/N(6)-dimethyladenosine(1780) in 18S rRNA + 4 S-adenosyl-L-homocysteine + 4 H(+). Its function is as follows. Specifically dimethylates two adjacent adenosines in the loop of a conserved hairpin near the 3'-end of 18S rRNA in the 40S particle. This Chaetomium thermophilum (strain DSM 1495 / CBS 144.50 / IMI 039719) (Thermochaetoides thermophila) protein is Dimethyladenosine transferase (DIM1).